The sequence spans 293 residues: Methylsterol monooxygenase 1 (293 aa).

Transmembrane regions (helical) follow at residues 55-75 (LIVHEAIYFLFSLPGFLFQFI) and 100-120 (KILFNHFFIQLPLICGTYYFT). One can recognise a Fatty acid hydroxylase domain in the interval 144 to 274 (GCAVIEDTWH…FTWWDKLFGT (131 aa)). A Histidine box-1 motif is present at residues 157 to 161 (HRLLH). The Histidine box-2 motif lies at 170–174 (HKVHH). The helical transmembrane segment at 199–219 (FFIGIVLLCDHVILLWAWVTI) threads the bilayer. The Histidine box-3 motif lies at 249-255 (HHDFHHM).

Belongs to the sterol desaturase family. Fe cation is required as a cofactor. In terms of processing, ubiquitinated by MARCHF6, leading to proteasomal degradation.

The protein localises to the endoplasmic reticulum membrane. It carries out the reaction 4,4-dimethyl-5alpha-cholest-7-en-3beta-ol + 6 Fe(II)-[cytochrome b5] + 3 O2 + 5 H(+) = 4alpha-carboxy-4beta-methyl-5alpha-cholest-7-ene-3beta-ol + 6 Fe(III)-[cytochrome b5] + 4 H2O. It catalyses the reaction 4,4-dimethyl-5alpha-cholesta-8,24-dien-3beta-ol + 6 Fe(II)-[cytochrome b5] + 3 O2 + 5 H(+) = 4beta-methylzymosterol-4alpha-carboxylate + 6 Fe(III)-[cytochrome b5] + 4 H2O. The enzyme catalyses 4alpha-methylzymosterol + 6 Fe(II)-[cytochrome b5] + 3 O2 + 5 H(+) = 4alpha-carboxyzymosterol + 6 Fe(III)-[cytochrome b5] + 4 H2O. The catalysed reaction is 4alpha-methyl-5alpha-cholest-7-en-3beta-ol + 6 Fe(II)-[cytochrome b5] + 3 O2 + 5 H(+) = 4alpha-carboxy-5alpha-cholest-7-en-3beta-ol + 6 Fe(III)-[cytochrome b5] + 4 H2O. It carries out the reaction 4,4-dimethyl-5alpha-cholest-8-en-3beta-ol + 6 Fe(II)-[cytochrome b5] + 3 O2 + 5 H(+) = 4alpha-carboxy-4beta-methyl-5alpha-cholest-8-en-3beta-ol + 6 Fe(III)-[cytochrome b5] + 4 H2O. It catalyses the reaction 4alpha-methyl-5alpha-cholest-8-en-3beta-ol + 6 Fe(II)-[cytochrome b5] + 3 O2 + 5 H(+) = 4alpha-carboxy-5alpha-cholest-8-ene-3beta-ol + 6 Fe(III)-[cytochrome b5] + 4 H2O. It participates in steroid biosynthesis; zymosterol biosynthesis; zymosterol from lanosterol: step 3/6. Its pathway is steroid biosynthesis; cholesterol biosynthesis. Catalyzes the three-step monooxygenation required for the demethylation of 4,4-dimethyl and 4alpha-methylsterols, which can be subsequently metabolized to cholesterol. The protein is Methylsterol monooxygenase 1 (Msmo1) of Mus musculus (Mouse).